Consider the following 435-residue polypeptide: Adenylosuccinate synthetase (435 aa).

GTP-binding positions include 11-17 (GDEGKGK) and 39-41 (GHT). Asp12 (proton acceptor) is an active-site residue. The Mg(2+) site is built by Asp12 and Gly39. IMP-binding positions include 12–15 (DEGK), 37–40 (NAGH), Thr128, Arg142, Gln223, Thr238, and Arg302. His40 acts as the Proton donor in catalysis. 298 to 304 (SVTGRPR) serves as a coordination point for substrate. Residues Arg304, 330–332 (KLD), and 412–414 (STG) each bind GTP.

It belongs to the adenylosuccinate synthetase family. As to quaternary structure, homodimer. The cofactor is Mg(2+).

The protein localises to the cytoplasm. The catalysed reaction is IMP + L-aspartate + GTP = N(6)-(1,2-dicarboxyethyl)-AMP + GDP + phosphate + 2 H(+). It participates in purine metabolism; AMP biosynthesis via de novo pathway; AMP from IMP: step 1/2. Its function is as follows. Plays an important role in the de novo pathway of purine nucleotide biosynthesis. Catalyzes the first committed step in the biosynthesis of AMP from IMP. This is Adenylosuccinate synthetase from Coxiella burnetii (strain Dugway 5J108-111).